A 502-amino-acid polypeptide reads, in one-letter code: Cytochrome P450 monooxygenase AacuE (502 aa).

Residues 4 to 26 (AITGLVATVTTFLAYIVFLSYTP) traverse the membrane as a helical segment. Residue N393 is glycosylated (N-linked (GlcNAc...) asparagine). C439 contacts heme.

Belongs to the cytochrome P450 family. Heme serves as cofactor.

The protein localises to the membrane. It functions in the pathway secondary metabolite biosynthesis. In terms of biological role, cytochrome P450 monooxygenase; part of the gene cluster that mediates the biosynthesis of the tetrahydroxanthone dimer secalonic acid D. The pathway begins with the synthesis of atrochrysone thioester by the polyketide synthase AacuL. The atrochrysone carboxyl ACP thioesterase AacuM then breaks the thioester bond and releases the atrochrysone carboxylic acid from AacuL. Atrochrysone carboxylic acid is decarboxylated by the decarboxylase AacuI, and oxidized by the anthrone oxygenase AacuG to yield emodin. Emodin is then reduced to emodin hydroquinone by a yet unidentified oxidoreductase. A-ring reduction by the short chain dehydrogenase AacuN, dehydration by the scytalone dehydratase-like protein AacuK and probable spontaneous re-oxidation, results in overall deoxygenation to chrysophanol. Baeyer-Villiger oxidation by the Baeyer-Villiger monooxygenase (BVMO) AacuH then yields monodictyphenone. Monodictyphenone is transformed into compounds with the tetrahydroxanthone skeleton via methylesterification by the methyltransferase AacuQ, followed by the action of the flavin-dependent monooxygenase AacuC, the isomerase AacuP, and the short chain dehydrogenase/reductase AacuF or AacuD. AacuF and AacuD should accept the same compound as a substrate but perform the ketoreduction with a different stereoselectivity, thus yielding blennolides B and A, respectively. In the final step of the biosynthesis, the cytochrome P450 monooxygenase AacuE accepts blennolide B and/or blennolide A to conduct the dimerization reaction to furnish the tetrahydroxanthone dimers, secalonic acids D, B, and F. The protein is Cytochrome P450 monooxygenase AacuE of Aspergillus aculeatus (strain ATCC 16872 / CBS 172.66 / WB 5094).